A 379-amino-acid chain; its full sequence is Cyclin-dependent kinase-like 4 (379 aa).

A Protein kinase domain is found at 4–286; sequence YEKLAKTGEG…CSQLLESSYF (283 aa). ATP is bound by residues 10–18 and Lys33; that span reads TGEGSYGVV. Positions 45 to 51 match the [NKR]KIAxRE motif; it reads KKIALRE. Residue Asp126 is the Proton acceptor of the active site.

The protein belongs to the protein kinase superfamily. CMGC Ser/Thr protein kinase family. CDC2/CDKX subfamily.

It is found in the cytoplasm. The catalysed reaction is L-seryl-[protein] + ATP = O-phospho-L-seryl-[protein] + ADP + H(+). It carries out the reaction L-threonyl-[protein] + ATP = O-phospho-L-threonyl-[protein] + ADP + H(+). This is Cyclin-dependent kinase-like 4 (CDKL4) from Homo sapiens (Human).